Here is an 88-residue protein sequence, read N- to C-terminus: HssA/B-like protein 19 (88 aa).

Belongs to the hssA/B family.

The chain is HssA/B-like protein 19 (hssl19) from Dictyostelium discoideum (Social amoeba).